Here is a 265-residue protein sequence, read N- to C-terminus: Acetylglutamate kinase (265 aa).

Substrate-binding positions include 41–42 (GG), R63, and N156.

It belongs to the acetylglutamate kinase family. ArgB subfamily.

It localises to the cytoplasm. The catalysed reaction is N-acetyl-L-glutamate + ATP = N-acetyl-L-glutamyl 5-phosphate + ADP. It participates in amino-acid biosynthesis; L-arginine biosynthesis; N(2)-acetyl-L-ornithine from L-glutamate: step 2/4. Catalyzes the ATP-dependent phosphorylation of N-acetyl-L-glutamate. The polypeptide is Acetylglutamate kinase (Brevibacillus brevis (strain 47 / JCM 6285 / NBRC 100599)).